The chain runs to 180 residues: Nucleoside-triphosphatase THEP1 (180 aa).

Residues 9-16 (GRPGIGKT) and 99-106 (VVIVDEVG) contribute to the ATP site.

This sequence belongs to the THEP1 NTPase family.

The catalysed reaction is a ribonucleoside 5'-triphosphate + H2O = a ribonucleoside 5'-diphosphate + phosphate + H(+). Has nucleotide phosphatase activity towards ATP, GTP, CTP, TTP and UTP. May hydrolyze nucleoside diphosphates with lower efficiency. This is Nucleoside-triphosphatase THEP1 from Methanopyrus kandleri (strain AV19 / DSM 6324 / JCM 9639 / NBRC 100938).